A 299-amino-acid chain; its full sequence is Nucleotide-binding protein SCO1952 (299 aa).

Residue 23 to 30 (GMSGAGRS) coordinates ATP. Residue 74–77 (DVRG) coordinates GTP.

The protein belongs to the RapZ-like family.

In terms of biological role, displays ATPase and GTPase activities. The protein is Nucleotide-binding protein SCO1952 of Streptomyces coelicolor (strain ATCC BAA-471 / A3(2) / M145).